The primary structure comprises 130 residues: Small ribosomal subunit protein uS9 (130 aa).

It belongs to the universal ribosomal protein uS9 family.

The chain is Small ribosomal subunit protein uS9 from Shewanella amazonensis (strain ATCC BAA-1098 / SB2B).